An 836-amino-acid chain; its full sequence is MASKRKSTTPCMVRTSQVVEQDVLEEADRAKDKGLGVPPSDVSKERWAAEPEPSSKESEVVEVRSVGESQSKKLQGGYECKYCPYSTQNLNEFTEHVDMQHPNVILNPLYVCAECNFTTKKYDSLSDHNSKFHPGETNFKLKLIKRNNQTVLEQSIEATNHVVSITASAPGSSDNDPGVSVGKTATVKTGKQKADAKKVPKKPDEAAPDNHMEGTARLVTDTAEILSRLGSVELLHDSLGHVMPSVQLPPNINLVPKVPVPLNTTKYNSALDTNATMINSFNKFPYPTQAELSWLTAASKHPEEHIRIWFATQRLKHGISWSPEEVEEARKKMFNGTIQSVPPTITVLPAQLTPTKVSQPILQTALPCQILGQPSLVLTQVTSGSTAVSCSPITLAVAGVTNHGQKRPLVTPQAAPEPKRPHIAQVPEPPPKVANTPLTPASDRKKTKLQIAHLKASFLQSQFPDDAEVYRLIEVTGLARSEIKKWFSDHRYRCQRGIVHITSESLAKDQMAITGTRHGRTYHVYPDFAAQKFKEKSQGQLKTLEDSFLKSSFPTQAEVERLRVETKLSRREIDSWFSERRKLRDSMEQAVLDSMGSGKKGSDVVAPNGALSRLDQLSGAQLAGPLPSPSSAVVQNQEQVHLLRSTFARTQWPTPQEYDQLAAKTGLVRTEIVRWFKENRCLLKTGTLSWLEQYQRHHLSDDHGHDVASRRATKHVAESPKNGSEVAHQYAKDPKALGEEESEKLVPRVKLVGDPSKDCLAGKPSEATSDRSEGSRDGQGSEENEESGIVDFVEVTVGEEDAISEKWGSWSQRVAEGTVERADSDSDSTPAEAGQA.

The segment at 24–58 is disordered; that stretch reads LEEADRAKDKGLGVPPSDVSKERWAAEPEPSSKES. The tract at residues 27–77 is interaction with EFNB1; it reads ADRAKDKGLGVPPSDVSKERWAAEPEPSSKESEVVEVRSVGESQSKKLQGG. Residues 42 to 58 are compositionally biased toward basic and acidic residues; it reads VSKERWAAEPEPSSKES. 2 consecutive C2H2-type zinc fingers follow at residues 78-101 and 110-133; these read YECK…DMQH and YVCA…SKFH. Positions 168 to 210 are disordered; it reads SAPGSSDNDPGVSVGKTATVKTGKQKADAKKVPKKPDEAAPDN. The span at 192-210 shows a compositional bias: basic and acidic residues; the sequence is QKADAKKVPKKPDEAAPDN. The required for homodimerization stretch occupies residues 195-358; the sequence is DAKKVPKKPD…PAQLTPTKVS (164 aa). 4 DNA-binding regions (homeobox) span residues 263–324, 439–501, 530–591, and 628–690; these read NTTK…WSPE, TPAS…IVHI, AQKF…EQAV, and SPSS…TLSW. The segment at 263 to 446 is required for repressor activity; sequence NTTKYNSALD…PLTPASDRKK (184 aa). Positions 263 to 497 are required for interaction with NFYA; that stretch reads NTTKYNSALD…SDHRYRCQRG (235 aa). Positions 317–446 are required for nuclear localization; sequence HGISWSPEEV…PLTPASDRKK (130 aa). Positions 404-442 are disordered; that stretch reads GQKRPLVTPQAAPEPKRPHIAQVPEPPPKVANTPLTPAS. A Glycyl lysine isopeptide (Lys-Gly) (interchain with G-Cter in SUMO2) cross-link involves residue Lys-455. Basic and acidic residues-rich tracts occupy residues 700–709 and 730–746; these read SDDHGHDVAS and YAKD…EKLV. Positions 700–836 are disordered; sequence SDDHGHDVAS…DSTPAEAGQA (137 aa). Phosphoserine is present on residues Ser-824 and Ser-826.

It belongs to the ZHX family. In terms of assembly, homodimer (via homeobox domain 1). Heterodimer with ZHX1 (via homeobox domain 1). Heterodimer with ZHX3 (via homeobox domain 1). Heterodimerization with ZHX1 is not necessary for repressor activity. Interacts (via homeobox domain) with NFYA (via N-terminus). Interacts with EFNB1 intracellular domain peptide; the interaction enhances ZHX2 transcriptional repression activity.

It localises to the nucleus. Acts as a transcriptional repressor. Represses the promoter activity of the CDC25C gene stimulated by NFYA. May play a role in retinal development where it regulates the composition of bipolar cell populations, by promoting differentiation of bipolar OFF-type cells. In the brain, may promote maintenance and suppress differentiation of neural progenitor cells in the developing cortex. This chain is Zinc fingers and homeoboxes protein 2 (Zhx2), found in Rattus norvegicus (Rat).